The primary structure comprises 263 residues: MSRIEPHAIPPELLLKAYRAGIFPMADSRDDPEVFWVEPKMRAILPLEGFHLSRSLARTLRRGKFTVTCNAAFEAVIDACAAPRPGAEESWISARIRESYIGLHEHGHAHSIECWHNGRLVGGLYGVGFARVFCGESMFSREPDASKVALAWLVASLRKVGAELLDCQFTTPHLASLGAVEIPQSQYLQLLSKAQRPYSSGELAAARALADAVGDGLGIGGAGVVKGDAAALGLPAGFAALRAEGAGSSSPGNVIAQSLTHTS.

The protein belongs to the L/F-transferase family.

It is found in the cytoplasm. The catalysed reaction is N-terminal L-lysyl-[protein] + L-leucyl-tRNA(Leu) = N-terminal L-leucyl-L-lysyl-[protein] + tRNA(Leu) + H(+). The enzyme catalyses N-terminal L-arginyl-[protein] + L-leucyl-tRNA(Leu) = N-terminal L-leucyl-L-arginyl-[protein] + tRNA(Leu) + H(+). It catalyses the reaction L-phenylalanyl-tRNA(Phe) + an N-terminal L-alpha-aminoacyl-[protein] = an N-terminal L-phenylalanyl-L-alpha-aminoacyl-[protein] + tRNA(Phe). Functions in the N-end rule pathway of protein degradation where it conjugates Leu, Phe and, less efficiently, Met from aminoacyl-tRNAs to the N-termini of proteins containing an N-terminal arginine or lysine. The polypeptide is Leucyl/phenylalanyl-tRNA--protein transferase (Novosphingobium aromaticivorans (strain ATCC 700278 / DSM 12444 / CCUG 56034 / CIP 105152 / NBRC 16084 / F199)).